The following is a 101-amino-acid chain: Small ribosomal subunit protein uS10 (101 aa).

Belongs to the universal ribosomal protein uS10 family. Part of the 30S ribosomal subunit.

Involved in the binding of tRNA to the ribosomes. The chain is Small ribosomal subunit protein uS10 from Mycobacterium ulcerans (strain Agy99).